The following is an 82-amino-acid chain: Sec-independent protein translocase protein TatA (82 aa).

The chain crosses the membrane as a helical span at residues 1 to 21 (MGGISIWQLLIIAVIVVLLFG).

Belongs to the TatA/E family. In terms of assembly, the Tat system comprises two distinct complexes: a TatABC complex, containing multiple copies of TatA, TatB and TatC subunits, and a separate TatA complex, containing only TatA subunits. Substrates initially bind to the TatABC complex, which probably triggers association of the separate TatA complex to form the active translocon.

Its subcellular location is the cell inner membrane. Its function is as follows. Part of the twin-arginine translocation (Tat) system that transports large folded proteins containing a characteristic twin-arginine motif in their signal peptide across membranes. TatA could form the protein-conducting channel of the Tat system. This is Sec-independent protein translocase protein TatA from Vibrio cholerae serotype O1 (strain ATCC 39315 / El Tor Inaba N16961).